The primary structure comprises 100 residues: Enhancer of yellow 2 transcription factor (100 aa).

It belongs to the ENY2 family. As to quaternary structure, component of the nuclear pore complex (NPC)-associated AMEX complex (anchoring and mRNA export complex), composed of at least e(y)2 and xmas-2. Component of the SAGA transcription coactivator-HAT complexes, at least composed of Ada2b, e(y)2, Pcaf/Gcn5, Taf10 and Nipped-A/Trrap. Within the SAGA complex, e(y)2, Sgf11, and not/nonstop form an additional subcomplex of SAGA called the DUB module (deubiquitination module). Component of the THO complex, composed of at least e(y)2, HPR1, THO2, THOC5, THOC6 and THOC7. Interacts with e(y)1. Interacts with su(Hw) (via zinc fingers). Interacts with xmas-2; required for localization to the nuclear periphery. Interacts with the nuclear pore complex (NPC).

The protein resides in the nucleus. It is found in the nucleoplasm. It localises to the cytoplasm. Involved in mRNA export coupled transcription activation by association with both the AMEX and the SAGA complexes. The SAGA complex is a multiprotein complex that activates transcription by remodeling chromatin and mediating histone acetylation and deubiquitination. Within the SAGA complex, participates in a subcomplex that specifically deubiquitinates histone H2B. The SAGA complex is recruited to specific gene promoters by activators, where it is required for transcription. Required for nuclear receptor-mediated transactivation. Involved in transcription elongation by recruiting the THO complex onto nascent mRNA. The AMEX complex functions in docking export-competent ribonucleoprotein particles (mRNPs) to the nuclear entrance of the nuclear pore complex (nuclear basket). AMEX participates in mRNA export and accurate chromatin positioning in the nucleus by tethering genes to the nuclear periphery. The protein is Enhancer of yellow 2 transcription factor of Drosophila persimilis (Fruit fly).